We begin with the raw amino-acid sequence, 179 residues long: Large ribosomal subunit protein uL5 (179 aa).

The protein belongs to the universal ribosomal protein uL5 family. In terms of assembly, part of the 50S ribosomal subunit; part of the 5S rRNA/L5/L18/L25 subcomplex. Contacts the 5S rRNA and the P site tRNA. Forms a bridge to the 30S subunit in the 70S ribosome.

In terms of biological role, this is one of the proteins that bind and probably mediate the attachment of the 5S RNA into the large ribosomal subunit, where it forms part of the central protuberance. In the 70S ribosome it contacts protein S13 of the 30S subunit (bridge B1b), connecting the 2 subunits; this bridge is implicated in subunit movement. Contacts the P site tRNA; the 5S rRNA and some of its associated proteins might help stabilize positioning of ribosome-bound tRNAs. The protein is Large ribosomal subunit protein uL5 of Histophilus somni (strain 129Pt) (Haemophilus somnus).